A 954-amino-acid polypeptide reads, in one-letter code: Glycine dehydrogenase (decarboxylating) (954 aa).

K700 is modified (N6-(pyridoxal phosphate)lysine).

Belongs to the GcvP family. In terms of assembly, the glycine cleavage system is composed of four proteins: P, T, L and H. Pyridoxal 5'-phosphate is required as a cofactor.

The catalysed reaction is N(6)-[(R)-lipoyl]-L-lysyl-[glycine-cleavage complex H protein] + glycine + H(+) = N(6)-[(R)-S(8)-aminomethyldihydrolipoyl]-L-lysyl-[glycine-cleavage complex H protein] + CO2. Its function is as follows. The glycine cleavage system catalyzes the degradation of glycine. The P protein binds the alpha-amino group of glycine through its pyridoxal phosphate cofactor; CO(2) is released and the remaining methylamine moiety is then transferred to the lipoamide cofactor of the H protein. The protein is Glycine dehydrogenase (decarboxylating) of Dinoroseobacter shibae (strain DSM 16493 / NCIMB 14021 / DFL 12).